A 346-amino-acid chain; its full sequence is Very-long-chain 3-oxoacyl-CoA reductase (346 aa).

Residues 26 to 46 form a helical membrane-spanning segment; it reads GASALLAAGSLFVVSRALVFV. Residues Val71, Asp126, Asp134, Asn153, Tyr220, Lys224, Ile253, and Ser255 each coordinate NADP(+). Catalysis depends on Tyr220, which acts as the Proton donor. The active-site Lowers pKa of active site Tyr is the Lys224.

The protein belongs to the short-chain dehydrogenases/reductases (SDR) family.

The protein localises to the endoplasmic reticulum membrane. It carries out the reaction a very-long-chain (3R)-3-hydroxyacyl-CoA + NADP(+) = a very-long-chain 3-oxoacyl-CoA + NADPH + H(+). Its pathway is lipid metabolism; fatty acid biosynthesis. Component of the microsomal membrane bound fatty acid elongation system, which produces the 26-carbon very long-chain fatty acids (VLCFA) from palmitate. Catalyzes the reduction of the 3-ketoacyl-CoA intermediate that is formed in each cycle of fatty acid elongation. VLCFAs serve as precursors for ceramide and sphingolipids. The protein is Very-long-chain 3-oxoacyl-CoA reductase of Aspergillus niger (strain ATCC MYA-4892 / CBS 513.88 / FGSC A1513).